Consider the following 341-residue polypeptide: 4-amino-5-hydroxymethyl-2-methylpyrimidine phosphate synthase (341 aa).

Lysine 62 bears the N6-(pyridoxal phosphate)lysine mark. Histidine 66 is a catalytic residue. 115 to 118 is a binding site for pyridoxal 5'-phosphate; the sequence is GEFG. A CCCFC; essential for catalytic activity, may be the site of iron coordination motif is present at residues 195-199; sequence CCCFC.

This sequence belongs to the NMT1/THI5 family. Homodimer. Fe cation serves as cofactor.

The catalysed reaction is N(6)-(pyridoxal phosphate)-L-lysyl-[4-amino-5-hydroxymethyl-2-methylpyrimidine phosphate synthase] + L-histidyl-[4-amino-5-hydroxymethyl-2-methylpyrimidine phosphate synthase] + 2 Fe(3+) + 4 H2O = L-lysyl-[4-amino-5-hydroxymethyl-2-methylpyrimidine phosphate synthase] + (2S)-2-amino-5-hydroxy-4-oxopentanoyl-[4-amino-5-hydroxymethyl-2-methylpyrimidine phosphate synthase] + 4-amino-2-methyl-5-(phosphooxymethyl)pyrimidine + 3-oxopropanoate + 2 Fe(2+) + 2 H(+). It functions in the pathway cofactor biosynthesis; thiamine diphosphate biosynthesis. Its function is as follows. Responsible for the formation of the pyrimidine heterocycle in the thiamine biosynthesis pathway. Catalyzes the formation of hydroxymethylpyrimidine phosphate (HMP-P) from histidine and pyridoxal phosphate (PLP). The protein uses PLP and the active site histidine to form HMP-P, generating an inactive enzyme. The enzyme can only undergo a single turnover, which suggests it is a suicide enzyme. In Uromyces fabae (Rust fungus), this protein is 4-amino-5-hydroxymethyl-2-methylpyrimidine phosphate synthase.